Consider the following 232-residue polypeptide: RNA chaperone ProQ (232 aa).

The interval 105–182 is disordered; sequence EAKARVQAQR…REEQHTPVSD (78 aa). The segment covering 117-136 has biased composition (basic and acidic residues); the sequence is QQAKKREAAAAAGEKEDAPR. The segment covering 137–146 has biased composition (basic residues); the sequence is RERKPRPTTP. Basic and acidic residues predominate over residues 147–177; the sequence is RRKEGAERKPRAQKPVEKAPKTVKAPREEQH.

It belongs to the ProQ family.

It localises to the cytoplasm. Functionally, RNA chaperone with significant RNA binding, RNA strand exchange and RNA duplexing activities. May regulate ProP activity through an RNA-based, post-transcriptional mechanism. In Shigella boydii serotype 18 (strain CDC 3083-94 / BS512), this protein is RNA chaperone ProQ.